The chain runs to 21 residues: Sarafotoxin-D (21 aa).

Cystine bridges form between Cys1/Cys15 and Cys3/Cys11.

It belongs to the endothelin/sarafotoxin family. As to expression, expressed by the venom gland.

It is found in the secreted. In terms of biological role, vasoconstrictor activity. These toxins cause cardiac arrest probably as a result of coronary vasospasm. May act by displaying agonistic activities towards endothelin-1 and -2 receptors (EDNRA and EDNRB). The chain is Sarafotoxin-D from Atractaspis engaddensis (Israeli burrowing asp).